We begin with the raw amino-acid sequence, 300 residues long: NAD kinase (300 aa).

Asp-78 acts as the Proton acceptor in catalysis. Residues 78–79 (DG), 152–153 (ND), His-163, Arg-180, Asp-182, and 193–198 (TAYALS) contribute to the NAD(+) site.

The protein belongs to the NAD kinase family. Requires a divalent metal cation as cofactor.

Its subcellular location is the cytoplasm. It carries out the reaction NAD(+) + ATP = ADP + NADP(+) + H(+). Functionally, involved in the regulation of the intracellular balance of NAD and NADP, and is a key enzyme in the biosynthesis of NADP. Catalyzes specifically the phosphorylation on 2'-hydroxyl of the adenosine moiety of NAD to yield NADP. This is NAD kinase from Alcanivorax borkumensis (strain ATCC 700651 / DSM 11573 / NCIMB 13689 / SK2).